Reading from the N-terminus, the 786-residue chain is Aculeacin-A acylase (786 aa).

Residues 1 to 22 (MTSSYMRLKAAAIAFGVIVATA) form the signal peptide. The propeptide occupies 23–34 (AVPSPASGREHD). The segment at 35 to 130 (GGYAALIRRA…PRDGVRAPCD (96 aa)) is substrate-binding. The propeptide at 215-229 (AAIAAALDGTSAGIG) is spacer peptide. The interval 220–239 (ALDGTSAGIGSNAYGLGAQA) is possible recognition-sequence of an AAC processing enzyme. The Nucleophile role is filled by Ser230. Residues 658 to 689 (ACNGSPASPSTRSVGDIHTDSRGERRIPIHGG) are disordered. A compositionally biased stretch (basic and acidic residues) spans 672-684 (GDIHTDSRGERRI).

The protein belongs to the peptidase S45 family. In terms of assembly, heterodimer of a small subunit and a large subunit processed from the same precursor.

It is found in the secreted. In terms of biological role, catalyzes the hydrolysis of the palmitoyl moiety of the antifungal antibiotic, aculeacin-A, giving a hexapeptide moiety and a long chain fatty acid. This is Aculeacin-A acylase (aac) from Actinoplanes utahensis.